A 390-amino-acid polypeptide reads, in one-letter code: Succinate--CoA ligase [ADP-forming] subunit beta (390 aa).

The region spanning 9 to 245 (KHLLKKYNIP…TTQEDEHETM (237 aa)) is the ATP-grasp domain. ATP contacts are provided by residues Lys46, 53-55 (GRG), Glu99, Ser102, and Glu107. Asn200 and Asp214 together coordinate Mg(2+). Substrate contacts are provided by residues Asn265 and 322 to 324 (GIV).

This sequence belongs to the succinate/malate CoA ligase beta subunit family. As to quaternary structure, heterotetramer of two alpha and two beta subunits. It depends on Mg(2+) as a cofactor.

It catalyses the reaction succinate + ATP + CoA = succinyl-CoA + ADP + phosphate. It carries out the reaction GTP + succinate + CoA = succinyl-CoA + GDP + phosphate. The protein operates within carbohydrate metabolism; tricarboxylic acid cycle; succinate from succinyl-CoA (ligase route): step 1/1. In terms of biological role, succinyl-CoA synthetase functions in the citric acid cycle (TCA), coupling the hydrolysis of succinyl-CoA to the synthesis of either ATP or GTP and thus represents the only step of substrate-level phosphorylation in the TCA. The beta subunit provides nucleotide specificity of the enzyme and binds the substrate succinate, while the binding sites for coenzyme A and phosphate are found in the alpha subunit. The sequence is that of Succinate--CoA ligase [ADP-forming] subunit beta from Coxiella burnetii (strain Dugway 5J108-111).